The sequence spans 209 residues: Small ribosomal subunit protein uS4 (209 aa).

Positions 99 to 162 (RRLDNMVYRL…RKNNKIIEAM (64 aa)) constitute an S4 RNA-binding domain.

It belongs to the universal ribosomal protein uS4 family. In terms of assembly, part of the 30S ribosomal subunit. Contacts protein S5. The interaction surface between S4 and S5 is involved in control of translational fidelity.

In terms of biological role, one of the primary rRNA binding proteins, it binds directly to 16S rRNA where it nucleates assembly of the body of the 30S subunit. Its function is as follows. With S5 and S12 plays an important role in translational accuracy. This Syntrophus aciditrophicus (strain SB) protein is Small ribosomal subunit protein uS4.